The following is a 362-amino-acid chain: Outer membrane porin protein OmpD (362 aa).

The N-terminal stretch at 1–21 (MKLKLVAVAVTSLLAAGVVNA) is a signal peptide.

This sequence belongs to the Gram-negative porin family. As to quaternary structure, homotrimer.

It localises to the cell outer membrane. In terms of biological role, forms pores that allow passive diffusion of small molecules across the outer membrane. In Salmonella choleraesuis (strain SC-B67), this protein is Outer membrane porin protein OmpD (ompD).